We begin with the raw amino-acid sequence, 222 residues long: Putative hemin import ATP-binding protein HrtA (222 aa).

The ABC transporter domain occupies 3 to 222; the sequence is LVVKDISKTF…QLYDGKIKNS (220 aa). 39–46 provides a ligand contact to ATP; the sequence is GASGSGKT.

It belongs to the ABC transporter superfamily. HrtA family. In terms of assembly, the complex is composed of two ATP-binding proteins (HrtA), two transmembrane proteins (HrtB) and a solute-binding protein.

It is found in the cell membrane. Part of the ABC transporter complex hrt involved in hemin import. Responsible for energy coupling to the transport system. This chain is Putative hemin import ATP-binding protein HrtA (hrtA), found in Staphylococcus epidermidis (strain ATCC 12228 / FDA PCI 1200).